Here is a 331-residue protein sequence, read N- to C-terminus: D-galactose/methyl-galactoside binding periplasmic protein MglB (331 aa).

Positions 1–24 are cleaved as a signal peptide; it reads MKKTAVLSTVAFAIALGSASASFA. Residues Asp38 and Asn115 each coordinate beta-D-galactose. Residues Asp38 and Asn115 each coordinate beta-D-glucose. Positions 158, 160, 162, 164, and 166 each coordinate Ca(2+). Beta-D-galactose-binding residues include His176, Asp178, and Arg182. Beta-D-glucose contacts are provided by His176, Asp178, and Arg182. Position 229 (Glu229) interacts with Ca(2+). Beta-D-galactose-binding residues include Asn235, Asp259, and Asn279. Residues Asn235, Asp259, and Asn279 each contribute to the beta-D-glucose site.

This sequence belongs to the bacterial solute-binding protein 2 family. As to quaternary structure, the ABC transporter complex is composed of one ATP-binding protein (MglA), two transmembrane proteins (MglC) and a solute-binding protein (MglB).

It is found in the periplasm. Its function is as follows. Part of the ABC transporter complex MglABC involved in galactose/methyl galactoside import. The polypeptide is D-galactose/methyl-galactoside binding periplasmic protein MglB (mglB) (Haemophilus influenzae (strain ATCC 51907 / DSM 11121 / KW20 / Rd)).